The following is a 271-amino-acid chain: Acyl-[acyl-carrier-protein]--UDP-N-acetylglucosamine O-acyltransferase (271 aa).

This sequence belongs to the transferase hexapeptide repeat family. LpxA subfamily. In terms of assembly, homotrimer.

The protein localises to the cytoplasm. The enzyme catalyses a (3R)-hydroxyacyl-[ACP] + UDP-N-acetyl-alpha-D-glucosamine = a UDP-3-O-[(3R)-3-hydroxyacyl]-N-acetyl-alpha-D-glucosamine + holo-[ACP]. Its pathway is glycolipid biosynthesis; lipid IV(A) biosynthesis; lipid IV(A) from (3R)-3-hydroxytetradecanoyl-[acyl-carrier-protein] and UDP-N-acetyl-alpha-D-glucosamine: step 1/6. Involved in the biosynthesis of lipid A, a phosphorylated glycolipid that anchors the lipopolysaccharide to the outer membrane of the cell. The chain is Acyl-[acyl-carrier-protein]--UDP-N-acetylglucosamine O-acyltransferase from Rhizobium rhizogenes (strain K84 / ATCC BAA-868) (Agrobacterium radiobacter).